Reading from the N-terminus, the 436-residue chain is Acrosin (436 aa).

An N-terminal signal peptide occupies residues 1–19 (MVEMLPTVAVLVLAVSVVA). A glycan (N-linked (GlcNAc...) asparagine) is linked at Asn22. 6 disulfides stabilise this stretch: Cys25–Cys155, Cys29–Cys163, Cys74–Cys90, Cys178–Cys247, Cys210–Cys226, and Cys237–Cys267. Residues 43-291 (IVSGQSAQLG…YLDWIASKIG (249 aa)) enclose the Peptidase S1 domain. Active-site charge relay system residues include His89 and Asp143. Residue Asn211 is glycosylated (N-linked (GlcNAc...) asparagine). Ser241 functions as the Charge relay system in the catalytic mechanism. The propeptide at 346 to 436 (PSSTQTSSSL…NKPSEPFLHS (91 aa)) is pro-rich.

Belongs to the peptidase S1 family. In terms of assembly, heavy chain (catalytic) and a light chain linked by two disulfide bonds. Forms a heterodimer with SERPINA5.

It carries out the reaction Preferential cleavage: Arg-|-Xaa, Lys-|-Xaa.. With respect to regulation, inhibited by SERPINA5. Functionally, acrosin is the major protease of mammalian spermatozoa. It is a serine protease of trypsin-like cleavage specificity, it is synthesized in a zymogen form, proacrosin and stored in the acrosome. This is Acrosin (Acr) from Mus musculus (Mouse).